The sequence spans 384 residues: BarH-like 2 homeobox protein (384 aa).

3 disordered regions span residues M1–T134, C154–S237, and P364–R384. Over residues Q119–T134 the composition is skewed to low complexity. Over residues E177–S217 the composition is skewed to basic and acidic residues. Positions P229–T288 form a DNA-binding region, homeobox.

It belongs to the BAR homeobox family. Expressed in the ganglion cell layer of the retina in the eye and in the ventral zone of the dorsal thalamus of the CNS.

Its subcellular location is the nucleus. In terms of biological role, potential regulator of neural basic helix-loop-helix genes. It may down-regulate expression of ASCL1 and, within the thalamus, up-regulate NGN2, thereby regulating distinct patterns of neuronal differentiation. In Rattus norvegicus (Rat), this protein is BarH-like 2 homeobox protein (Barhl2).